We begin with the raw amino-acid sequence, 197 residues long: MTEIFSDTGFRQLTQMFLAIIFFHTSEYILAIAIHGASKVTLSSLLISKHYALAMLISVLEYIAEIVFFPGLKQHWWISNFGLTMIILGEILRKTAIITAGRSFTHLIKIRREEHHKLVTEGVYQIMRHPSYSGFLIWSVGTQVMLCNPISAIAFAVVVWRFFAERIPYEEHYLKQFFGRQYVEYAQRVPSGVPFVN.

The next 3 membrane-spanning stretches (helical) occupy residues 16 to 36 (MFLAIIFFHTSEYILAIAIHG), 52 to 72 (ALAMLISVLEYIAEIVFFPGL), and 81 to 101 (FGLTMIILGEILRKTAIITAG). Residues 116–119 (HKLV), Y124, and 129–132 (HPSY) each bind S-adenosyl-L-methionine. Residues 140–160 (VGTQVMLCNPISAIAFAVVVW) traverse the membrane as a helical segment. R166 contributes to the substrate binding site. E170 is a binding site for S-adenosyl-L-methionine.

This sequence belongs to the class VI-like SAM-binding methyltransferase superfamily. Isoprenylcysteine carboxyl methyltransferase family. The cofactor is Zn(2+). As to expression, expressed in flowers, stems, leaves, roots and siliques. Detected in apices and vascular tissues of leaves and roots, in the stigma and in the filaments and anthers of stamen. Not found in petioles or hypocotyls.

Its subcellular location is the endoplasmic reticulum membrane. The catalysed reaction is [protein]-C-terminal S-[(2E,6E)-farnesyl]-L-cysteine + S-adenosyl-L-methionine = [protein]-C-terminal S-[(2E,6E)-farnesyl]-L-cysteine methyl ester + S-adenosyl-L-homocysteine. Inhibited by farnesylthioacetic acid (FTAA) and N-acetyl-S-trans, trans-farnesyl-l-cysteine (AFC). In terms of biological role, catalyzes the post-translational methylation of isoprenylated C-terminal cysteine residues, resulting in the modulation of the function of prenylated proteins. Involved in negative regulation of abscisic acid signaling. Carboxyl methylation is a reversible and potentially regulated step in the post-translational modification of prenylated proteins. This chain is Protein-S-isoprenylcysteine O-methyltransferase B, found in Arabidopsis thaliana (Mouse-ear cress).